A 269-amino-acid chain; its full sequence is Putative pyruvate, phosphate dikinase regulatory protein (269 aa).

Gly-147–Thr-154 is an ADP binding site.

Belongs to the pyruvate, phosphate/water dikinase regulatory protein family. PDRP subfamily.

It carries out the reaction N(tele)-phospho-L-histidyl/L-threonyl-[pyruvate, phosphate dikinase] + ADP = N(tele)-phospho-L-histidyl/O-phospho-L-threonyl-[pyruvate, phosphate dikinase] + AMP + H(+). It catalyses the reaction N(tele)-phospho-L-histidyl/O-phospho-L-threonyl-[pyruvate, phosphate dikinase] + phosphate + H(+) = N(tele)-phospho-L-histidyl/L-threonyl-[pyruvate, phosphate dikinase] + diphosphate. In terms of biological role, bifunctional serine/threonine kinase and phosphorylase involved in the regulation of the pyruvate, phosphate dikinase (PPDK) by catalyzing its phosphorylation/dephosphorylation. This is Putative pyruvate, phosphate dikinase regulatory protein from Clostridium botulinum (strain 657 / Type Ba4).